The primary structure comprises 205 residues: Ypt/Rab-type GTPase Rab7 (205 aa).

GTP is bound by residues 17–23 (SGVGKTS), 33–40 (FSASYKAT), G66, 125–128 (NKID), and 157–159 (SAK). The short motif at 37 to 45 (YKATIGADF) is the Effector region element. Residues C203 and C205 are each lipidated (S-geranylgeranyl cysteine). C205 is subject to Cysteine methyl ester.

The protein belongs to the small GTPase superfamily. Rab family.

The protein resides in the cell membrane. With respect to regulation, alternates between an inactive form bound to GDP and an active form bound to GTP. Activated by guanine nucleotide-exchange factors (GEFs), and inactivated by GTPase-activating proteins (GAPs). Its function is as follows. Ypt/Rab-type GTPases are key regulators of membrane trafficking and intracellular vesicular transport. They act as molecular switches that convert between GTP-bound and GDP-bound states, and regulate virtually all steps of membrane traffic from the formation of the transport vesicle at the donor membrane to its fusion at the target membrane. In the GDP-bound state, Ypt proteins are predominantly cytosolic, solubilized through the interaction with a GDP dissociation inhibitor (GDI). In the GTP-bound state, the proteins are membrane bound and interact with specific effector proteins that select cargo, promote vesicle movement, or verify the correct site of fusion. This is Ypt/Rab-type GTPase Rab7 (gtp-14) from Neurospora crassa (strain ATCC 24698 / 74-OR23-1A / CBS 708.71 / DSM 1257 / FGSC 987).